A 189-amino-acid polypeptide reads, in one-letter code: Apolipoprotein D (189 aa).

The first 20 residues, 1–20 (MVMLLLLLSALAGLFGAAEG), serve as a signal peptide directing secretion. Pyrrolidone carboxylic acid is present on Gln21. 2 cysteine pairs are disulfide-bonded: Cys28/Cys134 and Cys61/Cys185. Asn65 and Asn98 each carry an N-linked (GlcNAc...) (complex) asparagine glycan.

It belongs to the calycin superfamily. Lipocalin family. In terms of assembly, homodimer. In plasma, also exists as a disulfide-linked heterodimer with APOA2. In terms of processing, N-glycosylated. N-glycan heterogeneity at Asn-65: Hex5HexNAc4 (major) and Hex6HexNAc5 (minor); at Asn-98: Hex5HexNAc4 (minor), dHex1Hex5HexNAc4 (major), dHex1Hex6HexNAc5 (minor) and dHex1Hex7HexNAc6 (minor). In terms of tissue distribution, expressed in liver, intestine, pancreas, kidney, placenta, adrenal, spleen, fetal brain tissue and tears.

The protein resides in the secreted. Functionally, APOD occurs in the macromolecular complex with lecithin-cholesterol acyltransferase. It is probably involved in the transport and binding of bilin. Appears to be able to transport a variety of ligands in a number of different contexts. This is Apolipoprotein D (APOD) from Homo sapiens (Human).